Reading from the N-terminus, the 296-residue chain is Ribosomal protein L11 methyltransferase (296 aa).

Residues threonine 145, glycine 166, aspartate 188, and asparagine 230 each coordinate S-adenosyl-L-methionine.

This sequence belongs to the methyltransferase superfamily. PrmA family.

It is found in the cytoplasm. The enzyme catalyses L-lysyl-[protein] + 3 S-adenosyl-L-methionine = N(6),N(6),N(6)-trimethyl-L-lysyl-[protein] + 3 S-adenosyl-L-homocysteine + 3 H(+). Functionally, methylates ribosomal protein L11. The protein is Ribosomal protein L11 methyltransferase of Histophilus somni (strain 129Pt) (Haemophilus somnus).